The following is a 332-amino-acid chain: Ketol-acid reductoisomerase (NADP(+)) 1 (332 aa).

Positions 2–182 (AELFYDADAD…GGTRAGVIKT (181 aa)) constitute a KARI N-terminal Rossmann domain. NADP(+) contacts are provided by residues 25–28 (YGSQ), Ser51, Ser53, and 83–86 (DPIQ). His108 is a catalytic residue. Residue Gly134 coordinates NADP(+). A KARI C-terminal knotted domain is found at 183-328 (TFTEETETDL…KELRKLMSWV (146 aa)). Mg(2+) contacts are provided by Asp191, Glu195, Glu227, and Glu231. Substrate is bound at residue Ser252.

It belongs to the ketol-acid reductoisomerase family. Requires Mg(2+) as cofactor.

It carries out the reaction (2R)-2,3-dihydroxy-3-methylbutanoate + NADP(+) = (2S)-2-acetolactate + NADPH + H(+). It catalyses the reaction (2R,3R)-2,3-dihydroxy-3-methylpentanoate + NADP(+) = (S)-2-ethyl-2-hydroxy-3-oxobutanoate + NADPH + H(+). It participates in amino-acid biosynthesis; L-isoleucine biosynthesis; L-isoleucine from 2-oxobutanoate: step 2/4. It functions in the pathway amino-acid biosynthesis; L-valine biosynthesis; L-valine from pyruvate: step 2/4. Its function is as follows. Involved in the biosynthesis of branched-chain amino acids (BCAA). Catalyzes an alkyl-migration followed by a ketol-acid reduction of (S)-2-acetolactate (S2AL) to yield (R)-2,3-dihydroxy-isovalerate. In the isomerase reaction, S2AL is rearranged via a Mg-dependent methyl migration to produce 3-hydroxy-3-methyl-2-ketobutyrate (HMKB). In the reductase reaction, this 2-ketoacid undergoes a metal-dependent reduction by NADPH to yield (R)-2,3-dihydroxy-isovalerate. This is Ketol-acid reductoisomerase (NADP(+)) 1 from Streptomyces coelicolor (strain ATCC BAA-471 / A3(2) / M145).